A 26-amino-acid polypeptide reads, in one-letter code: SWCDPATLKYVSGITGCRAMVKLQCL.

The protein belongs to the protease inhibitor I6 (cereal trypsin/alpha-amylase inhibitor) family.

Its subcellular location is the secreted. Functionally, alpha-amylase inhibitor. The chain is Alpha-amylase inhibitor 1 from Saussurea costus (Costus).